The chain runs to 77 residues: Exodeoxyribonuclease 7 small subunit (77 aa).

The protein belongs to the XseB family. As to quaternary structure, heterooligomer composed of large and small subunits.

It is found in the cytoplasm. The enzyme catalyses Exonucleolytic cleavage in either 5'- to 3'- or 3'- to 5'-direction to yield nucleoside 5'-phosphates.. In terms of biological role, bidirectionally degrades single-stranded DNA into large acid-insoluble oligonucleotides, which are then degraded further into small acid-soluble oligonucleotides. The polypeptide is Exodeoxyribonuclease 7 small subunit (Lysinibacillus sphaericus (strain C3-41)).